The chain runs to 547 residues: Mitogen-activated protein kinase 15 (547 aa).

The segment at 1–20 (MCAAEVDRHVSQRYLIKRRL) is ubiquitin-conjugating. One can recognise a Protein kinase domain in the interval 14-305 (YLIKRRLGKG…AEQALQHPYV (292 aa)). ATP is bound by residues 20–28 (LGKGAYGIV) and K43. The Proton acceptor role is filled by D138. T176 carries the post-translational modification Phosphothreonine. The short motif at 176–178 (TEY) is the TXY element. Y178 is subject to Phosphotyrosine. Positions 266-286 (LDALLPPDTPPEALDLLKRLL) are necessary to interact with ESRRA, to regulate its subcellular localization and to inhibit its transcriptional activity. The interval 301–380 (QHPYVQRFHC…SQRQSLKPGV (80 aa)) is requires for interaction with GABARAP, MAP1LC3B AND GABARAPL1. A disordered region spans residues 370–503 (ASQRQSLKPG…EAPEPRPGRR (134 aa)). 2 PXXXP motif repeats span residues 378–382 (PGVLP) and 385–389 (LAETP). PXXXP motif; regulates binding with chromatin and interaction with PCNA repeat units follow at residues 393-397 (RGPKP) and 401-405 (HGHDP). A compositionally biased stretch (basic and acidic residues) spans 401-414 (HGHDPEHVEVRRQS). An Omega-N-methylarginine modification is found at R449. Residues 454–465 (SLTSQAAAQAAN) are compositionally biased toward polar residues. Residues 481–490 (AVGARRVPSR) show a composition bias toward low complexity. Positions 491–500 (LPREAPEPRP) are enriched in basic and acidic residues.

This sequence belongs to the protein kinase superfamily. CMGC Ser/Thr protein kinase family. MAP kinase subfamily. Interacts with CSK/c-Src, ABL1, RET and TGFB1I1. Interacts with GABARAP, MAP1LC3B and GABARAPL1; controls, in a kinase-dependent fashion, both basal and starvation-induced autophagy. Interacts with ESRRA; promotes re-localization of ESRRA to the cytoplasm through a XPO1-dependent mechanism then inhibits ESRRA transcriptional activity. Interacts with PCNA; the interaction is chromatin binding- and kinase activity-dependent and prevents MDM2-mediated PCNA destruction by inhibiting the association of PCNA with MDM2. Interacts with DVL2. Interacts with CLIC3; MAPK15 does not phosphorylates CLIC3. Post-translationally, autophosphorylated on Thr-176 and Tyr-178; activates the enzyme. Dephosphorylated by PTPN1. In terms of processing, ubiquitinated. Ubiquitination may allow its tight kinase activity regulation and rapid turnover. May be ubiquitinated by a SCF E3 ligase. Ubiquitously expressed at a weak level. Highest expression is found in testis and to a lower extent in lung.

Its subcellular location is the cytoplasm. It localises to the cytoskeleton. The protein localises to the cilium basal body. The protein resides in the cell junction. It is found in the tight junction. Its subcellular location is the microtubule organizing center. It localises to the centrosome. The protein localises to the centriole. The protein resides in the cytoplasmic vesicle. It is found in the autophagosome. Its subcellular location is the golgi apparatus. It localises to the nucleus. The protein localises to the spindle. The catalysed reaction is L-seryl-[protein] + ATP = O-phospho-L-seryl-[protein] + ADP + H(+). It catalyses the reaction L-threonyl-[protein] + ATP = O-phospho-L-threonyl-[protein] + ADP + H(+). Activated by threonine and tyrosine phosphorylation. Inhibited by dual specificity phosphatases, such as DUSP1. Phosphorylation and activation in response to DNA damaging agents, serum stimulation. Constitutively activated when phosphorylated on Tyr-178. Activity depends on the relative rates of MAPK15 autophosphorylation and dephosphorylation by PTPN1. Atypical MAPK protein that regulates several process such as autophagy, ciliogenesis, protein trafficking/secretion and genome integrity, in a kinase activity-dependent manner. Controls both, basal and starvation-induced autophagy throught its interaction with GABARAP, MAP1LC3B and GABARAPL1 leading to autophagosome formation, SQSTM1 degradation and reduced MAP1LC3B inhibitory phosphorylation. Regulates primary cilium formation and the localization of ciliary proteins involved in cilium structure, transport, and signaling. Prevents the relocation of the sugar-adding enzymes from the Golgi to the endoplasmic reticulum, thereby restricting the production of sugar-coated proteins. Upon amino-acid starvation, mediates transitional endoplasmic reticulum site disassembly and inhibition of secretion. Binds to chromatin leading to MAPK15 activation and interaction with PCNA, that which protects genomic integrity by inhibiting MDM2-mediated degradation of PCNA. Regulates DA transporter (DAT) activity and protein expression via activation of RhoA. In response to H(2)O(2) treatment phosphorylates ELAVL1, thus preventing it from binding to the PDCD4 3'UTR and rendering the PDCD4 mRNA accessible to miR-21 and leading to its degradation and loss of protein expression. Also functions in a kinase activity-independent manner as a negative regulator of growth. Phosphorylates in vitro FOS and MBP. During oocyte maturation, plays a key role in the microtubule organization and mei- otic cell cycle progression in oocytes, fertilized eggs, and early embryos. Interacts with ESRRA promoting its re-localization from the nucleus to the cytoplasm and then prevents its transcriptional activity. The sequence is that of Mitogen-activated protein kinase 15 (Mapk15) from Rattus norvegicus (Rat).